A 227-amino-acid chain; its full sequence is Large ribosomal subunit protein uL3 (227 aa).

This sequence belongs to the universal ribosomal protein uL3 family. In terms of assembly, part of the 50S ribosomal subunit. Forms a cluster with proteins L14 and L19.

Functionally, one of the primary rRNA binding proteins, it binds directly near the 3'-end of the 23S rRNA, where it nucleates assembly of the 50S subunit. The polypeptide is Large ribosomal subunit protein uL3 (Leuconostoc citreum (strain KM20)).